Here is a 290-residue protein sequence, read N- to C-terminus: Nucleotide-binding protein FN1089 (290 aa).

Position 11–18 (11–18) interacts with ATP; it reads GLSGAGKT. 56 to 59 provides a ligand contact to GTP; the sequence is DIRT.

This sequence belongs to the RapZ-like family.

In terms of biological role, displays ATPase and GTPase activities. This Fusobacterium nucleatum subsp. nucleatum (strain ATCC 25586 / DSM 15643 / BCRC 10681 / CIP 101130 / JCM 8532 / KCTC 2640 / LMG 13131 / VPI 4355) protein is Nucleotide-binding protein FN1089.